Here is a 266-residue protein sequence, read N- to C-terminus: Small ribosomal subunit protein uS3 (266 aa).

The KH type-2 domain maps to 39–107 (VREYLKKKLK…PVHVNIEEIR (69 aa)). Positions 214-266 (PVVEEVTEDKRPRRNARPGDRRPRRDGEGGAPGARRGGPRRGAGKPEDGKTGE) are disordered. Composition is skewed to basic and acidic residues over residues 230 to 241 (RPGDRRPRRDGE) and 257 to 266 (GKPEDGKTGE).

The protein belongs to the universal ribosomal protein uS3 family. As to quaternary structure, part of the 30S ribosomal subunit. Forms a tight complex with proteins S10 and S14.

Binds the lower part of the 30S subunit head. Binds mRNA in the 70S ribosome, positioning it for translation. This chain is Small ribosomal subunit protein uS3, found in Burkholderia thailandensis (strain ATCC 700388 / DSM 13276 / CCUG 48851 / CIP 106301 / E264).